The sequence spans 207 residues: Nuclear transcription factor Y subunit beta (207 aa).

The tract at residues 1-52 (MTMDGDSSTTDASQLGISADYIGGSHYVIQPHDDTEDSMNDHEDTNGSKESF) is a domain. Residues 27–52 (YVIQPHDDTEDSMNDHEDTNGSKESF) form a disordered region. The span at 39–52 (MNDHEDTNGSKESF) shows a compositional bias: basic and acidic residues. The b domain stretch occupies residues 53 to 142 (REQDIYLPIA…PLKLYLQKFR (90 aa)). Residues 59 to 65 (LPIANVA) mediate DNA binding. Residues 86-97 (VQECVSEFISFI) are subunit association domain (SAD). Residue lysine 140 forms a Glycyl lysine isopeptide (Lys-Gly) (interchain with G-Cter in ubiquitin) linkage. The segment at 143-207 (EAMKGEKGIG…ISGVQQIQFS (65 aa)) is c domain.

It belongs to the NFYB/HAP3 subunit family. Heterotrimeric transcription factor composed of three components, NF-YA, NF-YB and NF-YC. NF-YB and NF-YC must interact and dimerize for NF-YA association and DNA binding. Interacts with C1QBP. Monoubiquitination at Lys-140 plays an important role in transcriptional activation by allowing the deposition of histone H3 methylations as well as histone H2B monoubiquitination at 'Lys-121'.

Its subcellular location is the nucleus. Component of the sequence-specific heterotrimeric transcription factor (NF-Y) which specifically recognizes a 5'-CCAAT-3' box motif found in the promoters of its target genes. NF-Y can function as both an activator and a repressor, depending on its interacting cofactors. The sequence is that of Nuclear transcription factor Y subunit beta (Nfyb) from Mus musculus (Mouse).